Reading from the N-terminus, the 554-residue chain is Estrogen receptor beta (554 aa).

Residues 25–173 (TEIKNSPAGV…NPGSKKDAHF (149 aa)) are modulating. NR C4-type zinc fingers lie at residues 174–194 (CAVC…CEGC) and 210–234 (CPAT…LRKC). Residues 174 to 239 (CAVCSDYASG…RLRKCYEVGM (66 aa)) constitute a DNA-binding region (nuclear receptor). In terms of domain architecture, NR LBD spans 289–521 (SPEQFVLTLL…DLLLEMLNAH (233 aa)). Residues 529–554 (PLATHPEFGPLEQMEPGESLRKGEPQ) form a disordered region.

It belongs to the nuclear hormone receptor family. NR3 subfamily. As to quaternary structure, binds DNA as a homodimer. Can form a heterodimer with ER-alpha. As to expression, brain, pituitary, skeletal muscle, liver, adrenal, kidney, intestine and ovary.

Its subcellular location is the nucleus. Binds estrogens with an affinity similar to that of ER-alpha, and activates expression of reporter genes containing estrogen response elements (ERE) in an estrogen-dependent manner. Locally synthesized estrogens may act via ER beta, in addition to ER alpha, to mediate seasonal or developmental effects on nearby song nuclei. This chain is Estrogen receptor beta (ESR2), found in Sturnus vulgaris (Starling).